The primary structure comprises 381 residues: 3-hydroxyisobutyryl-CoA hydrolase, mitochondrial (381 aa).

The N-terminal 25 residues, 1–25 (MDRLLTISNHIGKNIRQFSTSTEEV), are a transit peptide targeting the mitochondrion. The substrate site is built by Glu116, Gly141, Glu164, and Asp172.

The protein belongs to the enoyl-CoA hydratase/isomerase family.

The protein localises to the mitochondrion. The enzyme catalyses 3-hydroxy-2-methylpropanoyl-CoA + H2O = 3-hydroxy-2-methylpropanoate + CoA + H(+). It functions in the pathway amino-acid degradation; L-valine degradation. Its function is as follows. Hydrolyzes 3-hydroxyisobutyryl-CoA (HIBYL-CoA), a saline catabolite. This Dictyostelium discoideum (Social amoeba) protein is 3-hydroxyisobutyryl-CoA hydrolase, mitochondrial (hibch).